Consider the following 294-residue polypeptide: Cytidine deaminase (294 aa).

2 consecutive CMP/dCMP-type deaminase domains span residues 48 to 168 and 186 to 294; these read DEDA…FGPK and LTGD…VLLG. Substrate is bound at residue 89–91; it reads NME. A Zn(2+)-binding site is contributed by histidine 102. Glutamate 104 serves as the catalytic Proton donor. Residues cysteine 129 and cysteine 132 each contribute to the Zn(2+) site.

The protein belongs to the cytidine and deoxycytidylate deaminase family. As to quaternary structure, homodimer. Requires Zn(2+) as cofactor.

The enzyme catalyses cytidine + H2O + H(+) = uridine + NH4(+). It carries out the reaction 2'-deoxycytidine + H2O + H(+) = 2'-deoxyuridine + NH4(+). This enzyme scavenges exogenous and endogenous cytidine and 2'-deoxycytidine for UMP synthesis. The protein is Cytidine deaminase of Salmonella paratyphi A (strain ATCC 9150 / SARB42).